We begin with the raw amino-acid sequence, 507 residues long: MFS-type transporter acdC (507 aa).

The interval 1–50 (MSPNAPAVDIGAAPSLDTPEGDTKQPAEDHVEKDSNLVDWDGPDDPEHPQ) is disordered. Positions 21–36 (GDTKQPAEDHVEKDSN) are enriched in basic and acidic residues. N-linked (GlcNAc...) asparagine glycosylation is present at Asn51. The chain crosses the membrane as a helical span at residues 58–78 (WGITFSLASMTMWITFSSSVL). N-linked (GlcNAc...) asparagine glycosylation is present at Asn90. The next 5 helical transmembrane spans lie at 95–115 (VMPLATTLVIFGFALGPLCWA), 125–145 (LPTFLGYGVFAIFQVPVAVAP), 155–175 (FFVGVFGSSALSVGPGVMADI), 186–206 (PFFFAANLLGPILGPIIGGFI), and 215–235 (WTAWLTLITSIFFGVLALLIV). Asn257 carries an N-linked (GlcNAc...) asparagine glycan. The next 6 helical transmembrane spans lie at 290-310 (PILICFTVYLSLIYGILYLFL), 328-348 (IAGLPFLGILVGMVLGIGIII), 371-391 (LVEMMLTSITMPIGLFWFGWA), 395-415 (HWMVQTIAGVPLGIGLFVLFM), 442-462 (FLGGSFPLFATAMYHNLGVDW), and 466-486 (ILGFISVAMVPIPFAFYIFGA).

This sequence belongs to the major facilitator superfamily. CAR1 family.

The protein resides in the membrane. Functionally, MFS-type transporter; part of the gene cluster that mediates the biosynthesis of aspcandine, a pyrrolobenzazepine alkaloid. The sequence is that of MFS-type transporter acdC from Aspergillus candidus.